Reading from the N-terminus, the 1134-residue chain is Ovochymase-1 (1134 aa).

The signal sequence occupies residues 1 to 22 (MGLLASAGLLLLLVIGHPRSLG). The propeptide at 23–46 (LKCGIRMVNMKSKEPAVGSRFFSR) is activation peptide. One can recognise a Peptidase S1 1 domain in the interval 38 to 296 (AVGSRFFSRI…LMDFITQNLF (259 aa)). N52 is a glycosylation site (N-linked (GlcNAc...) asparagine). C72 and C88 are joined by a disulfide. H87 (charge relay system) is an active-site residue. N-linked (GlcNAc...) asparagine glycosylation occurs at N99. E116 contributes to the Ca(2+) binding site. D139 acts as the Charge relay system in catalysis. Intrachain disulfides connect C173/C243, C204/C222, and C233/C262. The active-site Charge relay system is S237. 2 CUB domains span residues 284–410 (VSEL…VTAV) and 419–531 (CGSL…FTIL). N-linked (GlcNAc...) asparagine glycosylation is present at N324. 3 cysteine pairs are disulfide-bonded: C341-C373, C419-C446, and C473-C494. N431 carries an N-linked (GlcNAc...) asparagine glycan. N-linked (GlcNAc...) asparagine glycosylation is present at N507. A Peptidase S1 2 domain is found at 575–812 (IAGGEEACPH…FLDWIQSKIN (238 aa)). C600 and C616 are joined by a disulfide. Residues H615 and D664 each act as charge relay system in the active site. 4 cysteine pairs are disulfide-bonded: C698–C769, C729–C747, C759–C788, and C846–C873. Catalysis depends on S763, which acts as the Charge relay system. Positions 846-957 (CSEAELEKPR…GAFGISYIVL (112 aa)) constitute a CUB 3 domain. N-linked (GlcNAc...) asparagine glycosylation is present at N1106.

Belongs to the peptidase S1 family.

The protein resides in the secreted. The sequence is that of Ovochymase-1 (OVCH1) from Homo sapiens (Human).